We begin with the raw amino-acid sequence, 448 residues long: Methylenetetrahydrofolate--tRNA-(uracil-5-)-methyltransferase TrmFO (448 aa).

An FAD-binding site is contributed by 13 to 18 (GAGLAG).

It belongs to the MnmG family. TrmFO subfamily. FAD is required as a cofactor.

Its subcellular location is the cytoplasm. It carries out the reaction uridine(54) in tRNA + (6R)-5,10-methylene-5,6,7,8-tetrahydrofolate + NADH + H(+) = 5-methyluridine(54) in tRNA + (6S)-5,6,7,8-tetrahydrofolate + NAD(+). The catalysed reaction is uridine(54) in tRNA + (6R)-5,10-methylene-5,6,7,8-tetrahydrofolate + NADPH + H(+) = 5-methyluridine(54) in tRNA + (6S)-5,6,7,8-tetrahydrofolate + NADP(+). Its function is as follows. Catalyzes the folate-dependent formation of 5-methyl-uridine at position 54 (M-5-U54) in all tRNAs. This is Methylenetetrahydrofolate--tRNA-(uracil-5-)-methyltransferase TrmFO from Streptococcus pyogenes serotype M28 (strain MGAS6180).